Consider the following 146-residue polypeptide: Villin-like protein ABP41 (146 aa).

This sequence belongs to the villin/gelsolin family. As to quaternary structure, binds to actin. As to expression, expressed in pollen (at protein level).

The protein resides in the cytoplasm. It localises to the cytoskeleton. In terms of biological role, ca(2+)-dependent actin filament-severing protein that is required for pollen tube growth. Probably regulates the dynamics of the actin cytoskeleton. It can promote the assembly of monomers into filaments (nucleation) as well as sever filaments already formed. This Lilium davidii (David's lily) protein is Villin-like protein ABP41.